The chain runs to 267 residues: Mannose-specific lectin 1 (267 aa).

The N-terminal stretch at 1–26 (MAKLLLFLLPAILGLLVPPRSWSAVA) is a signal peptide. Bulb-type lectin domains lie at 29 to 134 (TNYL…PSVP) and 148 to 255 (NNLL…PQAK). Beta-D-mannose is bound by residues 54–58 (QDDCN), tyrosine 62, tryptophan 66, glutamine 67, 173–177 (QGDCN), tyrosine 181, and 185–188 (YGWQ). The short motif at 54-62 (QDDCNLVLY) is the Carbohydrate-binding motif 1 element. Disulfide bonds link cysteine 57/cysteine 77 and cysteine 176/cysteine 198. The Carbohydrate-binding motif 2 signature appears at 173 to 181 (QGDCNLVLY).

In terms of assembly, forms heterotetramer of 2 chains 1 and 2 chains 2 arranged as a dimer of chain 1 and chain 2 heterodimers.

The protein localises to the secreted. Mannose-specific lectin. Shows agglutinating activity towards erythrocytes from rabbit. The protein is Mannose-specific lectin 1 of Colocasia esculenta (Wild taro).